The primary structure comprises 726 residues: Procollagen-lysine,2-oxoglutarate 5-dioxygenase 1 (726 aa).

Residues 1–18 (MRLLLLLAPLGWLLLAET) form the signal peptide. 2 N-linked (GlcNAc...) asparagine glycosylation sites follow: asparagine 196 and asparagine 537. The Fe2OG dioxygenase domain occupies 635-726 (QFDLAFVVRY…RYIAVSFVDP (92 aa)). Fe cation-binding residues include histidine 655 and aspartate 657. Asparagine 685 carries N-linked (GlcNAc...) asparagine glycosylation. Histidine 707 is a Fe cation binding site. Arginine 717 is a catalytic residue.

As to quaternary structure, homodimer. Identified in a complex with P3H3 and P3H4. Requires Fe(2+) as cofactor. L-ascorbate serves as cofactor.

It is found in the rough endoplasmic reticulum membrane. The enzyme catalyses L-lysyl-[collagen] + 2-oxoglutarate + O2 = (5R)-5-hydroxy-L-lysyl-[collagen] + succinate + CO2. Functionally, part of a complex composed of PLOD1, P3H3 and P3H4 that catalyzes hydroxylation of lysine residues in collagen alpha chains and is required for normal assembly and cross-linkling of collagen fibrils. Forms hydroxylysine residues in -Xaa-Lys-Gly- sequences in collagens. These hydroxylysines serve as sites of attachment for carbohydrate units and are essential for the stability of the intermolecular collagen cross-links. In Bos taurus (Bovine), this protein is Procollagen-lysine,2-oxoglutarate 5-dioxygenase 1 (PLOD1).